Consider the following 449-residue polypeptide: Galactosyl transferase CpsE (449 aa).

5 consecutive transmembrane segments (helical) span residues 5–22 (VVVY…TPNF), 27–46 (DLLF…DFYR), 59–78 (MVLK…FFIF), 88–107 (SFFT…NSFL), and 258–280 (FLDI…FLVP).

The protein belongs to the bacterial sugar transferase family.

The protein localises to the cell membrane. Its function is as follows. Galactosyl transferase is essential for the assembly of the group B streptococci (GBS) type III capsular polysaccharide. May be involved in the formation of either or both galactosidic bonds by catalyzing the addition of galactose to an oligosaccharide precursor or to a lipid intermediate. Type III capsular polysaccharide consists of a linear backbone with short side chains ending in residues of N-acetylneuraminic acid or sialic acid. The presence of sialic acid on the surface of the organism inhibits activation of the alternative pathway of complement and is thought to be an important element in the virulence function of the capsule. This chain is Galactosyl transferase CpsE (cpsE), found in Streptococcus agalactiae serotype III (strain NEM316).